A 122-amino-acid chain; its full sequence is Large ribosomal subunit protein uL14 (122 aa).

This sequence belongs to the universal ribosomal protein uL14 family. In terms of assembly, part of the 50S ribosomal subunit. Forms a cluster with proteins L3 and L19. In the 70S ribosome, L14 and L19 interact and together make contacts with the 16S rRNA in bridges B5 and B8.

Binds to 23S rRNA. Forms part of two intersubunit bridges in the 70S ribosome. The protein is Large ribosomal subunit protein uL14 of Bacillus anthracis (strain A0248).